The following is a 182-amino-acid chain: CDP-diacylglycerol--glycerol-3-phosphate 3-phosphatidyltransferase (182 aa).

The Cytoplasmic segment spans residues Q2–F12. A helical transmembrane segment spans residues R13–L37. Residues I38–T60 are Periplasmic-facing. Residues R61–L81 form a helical membrane-spanning segment. The Cytoplasmic portion of the chain corresponds to V82–Y86. Residues H87–A107 form a helical membrane-spanning segment. Over L108–P145 the chain is Periplasmic. A helical membrane pass occupies residues N146 to M168. The Cytoplasmic segment spans residues L169–D181.

The protein belongs to the CDP-alcohol phosphatidyltransferase class-I family.

It localises to the cell inner membrane. It carries out the reaction a CDP-1,2-diacyl-sn-glycerol + sn-glycerol 3-phosphate = a 1,2-diacyl-sn-glycero-3-phospho-(1'-sn-glycero-3'-phosphate) + CMP + H(+). Its pathway is phospholipid metabolism; phosphatidylglycerol biosynthesis; phosphatidylglycerol from CDP-diacylglycerol: step 1/2. Functionally, catalyzes the conversion of cytidine diphosphate diacylglycerol (CDP-DG) and glycerol 3-phosphate into phosphatidylglycerol. Essential for the synthesis of anionic phospholipids, thereby playing a role in balancing the ratio of zwitterionic and anionic phospholipids, which is thought to be important for normal membrane function. The chain is CDP-diacylglycerol--glycerol-3-phosphate 3-phosphatidyltransferase from Salmonella choleraesuis (strain SC-B67).